The sequence spans 302 residues: N-acetylaspartate synthetase (302 aa).

A compositionally biased stretch (pro residues) spans 46–60 (PGPAAAPPAPPPAPV). Residues 46–72 (PGPAAAPPAPPPAPVAQPHGGAGGAGP) form a disordered region. The chain crosses the membrane as a helical span at residues 121–141 (YALLAALCFAVSRSLLLTCLV). Residues 143 to 283 (AALLGLRYYY…VLPGMTLSLA (141 aa)) form the N-acetyltransferase domain.

It belongs to the NAT8 family. In terms of tissue distribution, expressed in brain.

It localises to the cytoplasm. Its subcellular location is the microsome membrane. The protein localises to the mitochondrion membrane. The protein resides in the endoplasmic reticulum membrane. The catalysed reaction is L-aspartate + acetyl-CoA = N-acetyl-L-aspartate + CoA + H(+). With respect to regulation, aminooxyacetic acid (AOAA) blocks its activity in both cytoplasm and mitochondria. Its function is as follows. Catalyzes the synthesis of N-acetylaspartate acid (NAA) from L-aspartate and acetyl-CoA. Promotes dopamine uptake by regulating TNF-alpha expression. Attenuates methamphetamine-induced inhibition of dopamine uptake. The polypeptide is N-acetylaspartate synthetase (Homo sapiens (Human)).